We begin with the raw amino-acid sequence, 250 residues long: 3-deoxy-manno-octulosonate cytidylyltransferase (250 aa).

It belongs to the KdsB family.

The protein localises to the cytoplasm. The enzyme catalyses 3-deoxy-alpha-D-manno-oct-2-ulosonate + CTP = CMP-3-deoxy-beta-D-manno-octulosonate + diphosphate. It functions in the pathway nucleotide-sugar biosynthesis; CMP-3-deoxy-D-manno-octulosonate biosynthesis; CMP-3-deoxy-D-manno-octulosonate from 3-deoxy-D-manno-octulosonate and CTP: step 1/1. Its pathway is bacterial outer membrane biogenesis; lipopolysaccharide biosynthesis. Activates KDO (a required 8-carbon sugar) for incorporation into bacterial lipopolysaccharide in Gram-negative bacteria. This chain is 3-deoxy-manno-octulosonate cytidylyltransferase, found in Sinorhizobium medicae (strain WSM419) (Ensifer medicae).